Reading from the N-terminus, the 432-residue chain is 3-phosphoshikimate 1-carboxyvinyltransferase (432 aa).

Residues Lys-22, Ser-23, and Arg-27 each coordinate 3-phosphoshikimate. Phosphoenolpyruvate is bound at residue Lys-22. The phosphoenolpyruvate site is built by Gly-96 and Arg-127. Residues Ser-173, Ser-174, Gln-175, Ser-201, Asp-317, Asn-340, and Lys-344 each contribute to the 3-phosphoshikimate site. A phosphoenolpyruvate-binding site is contributed by Gln-175. The active-site Proton acceptor is Asp-317. Residues Arg-348, Arg-392, and Lys-417 each contribute to the phosphoenolpyruvate site.

The protein belongs to the EPSP synthase family. As to quaternary structure, monomer.

The protein resides in the cytoplasm. It carries out the reaction 3-phosphoshikimate + phosphoenolpyruvate = 5-O-(1-carboxyvinyl)-3-phosphoshikimate + phosphate. The protein operates within metabolic intermediate biosynthesis; chorismate biosynthesis; chorismate from D-erythrose 4-phosphate and phosphoenolpyruvate: step 6/7. Catalyzes the transfer of the enolpyruvyl moiety of phosphoenolpyruvate (PEP) to the 5-hydroxyl of shikimate-3-phosphate (S3P) to produce enolpyruvyl shikimate-3-phosphate and inorganic phosphate. This is 3-phosphoshikimate 1-carboxyvinyltransferase from Mannheimia haemolytica (Pasteurella haemolytica).